The sequence spans 196 residues: 3-isopropylmalate dehydratase small subunit (196 aa).

This sequence belongs to the LeuD family. LeuD type 1 subfamily. In terms of assembly, heterodimer of LeuC and LeuD.

The enzyme catalyses (2R,3S)-3-isopropylmalate = (2S)-2-isopropylmalate. It participates in amino-acid biosynthesis; L-leucine biosynthesis; L-leucine from 3-methyl-2-oxobutanoate: step 2/4. Functionally, catalyzes the isomerization between 2-isopropylmalate and 3-isopropylmalate, via the formation of 2-isopropylmaleate. The sequence is that of 3-isopropylmalate dehydratase small subunit from Streptococcus sanguinis (strain SK36).